Here is a 65-residue protein sequence, read N- to C-terminus: Large ribosomal subunit protein bL35 (65 aa).

The protein belongs to the bacterial ribosomal protein bL35 family.

This chain is Large ribosomal subunit protein bL35, found in Synechococcus sp. (strain CC9605).